The primary structure comprises 346 residues: Heat-inducible transcription repressor HrcA (346 aa).

The protein belongs to the HrcA family.

Functionally, negative regulator of class I heat shock genes (grpE-dnaK-dnaJ and groELS operons). Prevents heat-shock induction of these operons. The chain is Heat-inducible transcription repressor HrcA from Fructilactobacillus sanfranciscensis (Lactobacillus sanfranciscensis).